The primary structure comprises 475 residues: Integrator complex subunit 15 (475 aa).

Residues 402–444 (YPHIHPGRPSPLSPHSPHQSTLSSPHSPHTVLTAHPTHPALAP) are disordered. Positions 416–430 (HSPHQSTLSSPHSPH) are enriched in low complexity.

The protein belongs to the Integrator subunit 15 family. In terms of assembly, component of the Integrator complex, composed of core subunits INTS1, INTS2, INTS3, INTS4, INTS5, INTS6, INTS7, INTS8, INTS9/RC74, INTS10, INTS11/CPSF3L, INTS12, INTS13, INTS14 and INTS15. The core complex associates with protein phosphatase 2A subunits PPP2CA and PPP2R1A, to form the Integrator-PP2A (INTAC) complex. INTS15 is part of the tail subcomplex, composed of INTS10, INTS13, INTS14 and INTS15.

The protein localises to the nucleus. The protein resides in the chromosome. In terms of biological role, component of the integrator complex, a multiprotein complex that terminates RNA polymerase II (Pol II) transcription in the promoter-proximal region of genes. The integrator complex provides a quality checkpoint during transcription elongation by driving premature transcription termination of transcripts that are unfavorably configured for transcriptional elongation: the complex terminates transcription by (1) catalyzing dephosphorylation of the C-terminal domain (CTD) of Pol II subunit POLR2A/RPB1 and SUPT5H/SPT5, (2) degrading the exiting nascent RNA transcript via endonuclease activity and (3) promoting the release of Pol II from bound DNA. The integrator complex is also involved in terminating the synthesis of non-coding Pol II transcripts, such as enhancer RNAs (eRNAs), small nuclear RNAs (snRNAs), telomerase RNAs and long non-coding RNAs (lncRNAs). INTS15 is part of the integrator tail module that acts as a platform for the recruitment of transcription factors at promoters. Within the integrator complex, INTS15 is required to bridge different integrator modules. The chain is Integrator complex subunit 15 (ints15) from Danio rerio (Zebrafish).